Here is a 317-residue protein sequence, read N- to C-terminus: Lipopolysaccharide heptosyltransferase 1 (317 aa).

ADP-L-glycero-beta-D-manno-heptose-binding residues include threonine 187, threonine 188, lysine 192, glutamate 222, methionine 242, aspartate 261, threonine 262, glycine 263, and histidine 266.

The protein belongs to the glycosyltransferase 9 family.

It is found in the cell inner membrane. It carries out the reaction an alpha-Kdo-(2-&gt;4)-alpha-Kdo-(2-&gt;6)-lipid A + ADP-L-glycero-beta-D-manno-heptose = an L-alpha-D-Hep-(1-&gt;5)-[alpha-Kdo-(2-&gt;4)]-alpha-Kdo-(2-&gt;6)-lipid A + ADP + H(+). The protein operates within bacterial outer membrane biogenesis; LPS core biosynthesis. In terms of biological role, glycosyltransferase involved in the biosynthesis of the core oligosaccharide region of lipopolysaccharide (LPS). Catalyzes the addition of the first heptose unit to one 3-deoxy-D-manno-octulosonic acid (Kdo) residue of the Kdo2-lipid A module. This is Lipopolysaccharide heptosyltransferase 1 from Salmonella typhimurium (strain LT2 / SGSC1412 / ATCC 700720).